Reading from the N-terminus, the 275-residue chain is MPLMKFKPTSPGRRSAVRVVTPDLHKGAPHAALLDSQSKSGGRNHHGRITVRHVGGGHKQHYRIIDFKRNKEGIPARVERIEYDPNRTAHIALLCYVDGERCYIIAPKGLKAGDQVIAGANAPIKTGNTLPLRNIPVGTTVHGIELKPGKGAQIARAAGAAVQLVAREGIYATLRLRSGEMRKVPVECRATIGEVGNDEHNLEKLGKAGAKRWRGVRPTVRGAAMNPVDHPHGGGEAKAGQGNPHPVTPWGVPTKGYKTRKNKRTQQFIVRDRRG.

The disordered stretch occupies residues 224–275 (AMNPVDHPHGGGEAKAGQGNPHPVTPWGVPTKGYKTRKNKRTQQFIVRDRRG).

The protein belongs to the universal ribosomal protein uL2 family. As to quaternary structure, part of the 50S ribosomal subunit. Forms a bridge to the 30S subunit in the 70S ribosome.

Functionally, one of the primary rRNA binding proteins. Required for association of the 30S and 50S subunits to form the 70S ribosome, for tRNA binding and peptide bond formation. It has been suggested to have peptidyltransferase activity; this is somewhat controversial. Makes several contacts with the 16S rRNA in the 70S ribosome. In Xanthomonas oryzae pv. oryzae (strain MAFF 311018), this protein is Large ribosomal subunit protein uL2.